The sequence spans 130 residues: Small ribosomal subunit protein uS8 (130 aa).

This sequence belongs to the universal ribosomal protein uS8 family. As to quaternary structure, part of the 30S ribosomal subunit.

One of the primary rRNA binding proteins, it binds directly to 16S rRNA central domain where it helps coordinate assembly of the platform of the 30S subunit. This chain is Small ribosomal subunit protein uS8, found in Pyrobaculum neutrophilum (strain DSM 2338 / JCM 9278 / NBRC 100436 / V24Sta) (Thermoproteus neutrophilus).